Consider the following 469-residue polypeptide: Glutamine synthetase (469 aa).

Residues 13-97 form the GS beta-grasp domain; the sequence is NEVKFVDLRF…IRCDILEPAT (85 aa). Positions 105 to 469 constitute a GS catalytic domain; the sequence is PRSIAKRAEE…PLEFELYYSV (365 aa). Mg(2+)-binding residues include Glu130 and Glu132. Glu208 contacts ATP. Residues Glu213 and Glu221 each coordinate Mg(2+). Residues 265-266 and Gly266 each bind L-glutamate; that span reads NG. His270 lines the Mg(2+) pocket. ATP-binding positions include 272-274 and Ser274; that span reads HQS. L-glutamate contacts are provided by Arg322, Glu328, and Arg340. Arg340, Arg345, and Lys353 together coordinate ATP. Glu358 provides a ligand contact to Mg(2+). Residue Arg360 participates in L-glutamate binding. Position 398 is an O-AMP-tyrosine (Tyr398).

It belongs to the glutamine synthetase family. In terms of assembly, oligomer of 12 subunits arranged in the form of two hexameric ring. The cofactor is Mg(2+).

The protein resides in the cytoplasm. The catalysed reaction is L-glutamate + NH4(+) + ATP = L-glutamine + ADP + phosphate + H(+). The activity of this enzyme could be controlled by adenylation under conditions of abundant glutamine. Its function is as follows. Catalyzes the ATP-dependent biosynthesis of glutamine from glutamate and ammonia. This Vibrio cholerae serotype O1 (strain ATCC 39315 / El Tor Inaba N16961) protein is Glutamine synthetase (glnAv).